Here is a 261-residue protein sequence, read N- to C-terminus: Non-structural protein 2a (261 aa).

This sequence belongs to the coronaviruses ns2a protein family.

The protein resides in the host cytoplasm. Functionally, not essential for virus replication in transformed murine cells. This Mus musculus (Mouse) protein is Non-structural protein 2a.